We begin with the raw amino-acid sequence, 464 residues long: Argininosuccinate lyase 2 (464 aa).

The protein belongs to the lyase 1 family. Argininosuccinate lyase subfamily.

The protein resides in the cytoplasm. It carries out the reaction 2-(N(omega)-L-arginino)succinate = fumarate + L-arginine. The protein operates within amino-acid biosynthesis; L-arginine biosynthesis; L-arginine from L-ornithine and carbamoyl phosphate: step 3/3. This is Argininosuccinate lyase 2 from Pseudomonas fluorescens (strain Pf0-1).